Reading from the N-terminus, the 408-residue chain is Metacaspase-1B (408 aa).

The tract at residues 1–98 (MYHRHSAPPP…PPLEAQQFGN (98 aa)) is disordered. Pro residues-rich tracts occupy residues 24–49 (WPPPQPYEYPPYPPQGPPPAHTFPPP) and 56–66 (SPYPTPPPHSP). Active-site residues include histidine 199 and cysteine 255.

The protein belongs to the peptidase C14B family.

Its function is as follows. Involved in cell death (apoptosis). Required for the apoptotic-like loss of membrane phospholipid asymmetry at stationary phase and facilitates growth under conditions of endoplasmic reticulum stress. This chain is Metacaspase-1B (casB), found in Aspergillus fumigatus (strain CBS 144.89 / FGSC A1163 / CEA10) (Neosartorya fumigata).